A 69-amino-acid polypeptide reads, in one-letter code: Cap-specific mRNA (nucleoside-2'-O-)-methyltransferase (69 aa).

Tyrosine 22 is an mRNA binding site. 3 residues coordinate S-adenosyl-L-methionine: glutamine 39, tyrosine 66, and glycine 68.

Belongs to the class I-like SAM-binding methyltransferase superfamily. Poxvirus/kinetoplastid 2'-O-MTase family. As to quaternary structure, interacts with poly(A) polymerase catalytic subunit OPG063. Interacts with OPG109 and OPG123; these interactions might help linking transcription to capping and polyadenylation.

The protein resides in the virion. The catalysed reaction is a 5'-end (N(7)-methyl 5'-triphosphoguanosine)-ribonucleoside in mRNA + S-adenosyl-L-methionine = a 5'-end (N(7)-methyl 5'-triphosphoguanosine)-(2'-O-methyl-ribonucleoside) in mRNA + S-adenosyl-L-homocysteine + H(+). Displays methyltransferase, positive regulation of the poly(A) polymerase and transcription elongation activities. Involved in the modification of both mRNA ends and in intermediate and late gene positive transcription elongation. At the mRNAs 5' end, methylates the ribose 2' OH group of the first transcribed nucleotide, thereby producing a 2'-O-methylpurine cap. At the 3' end, functions as a processivity factor which stimulates the activity of the viral poly(A) polymerase OPG063 that creates mRNA's poly(A) tail. In the presence of OPG102, OPG063 does not dissociate from the RNA allowing tail elongation to around 250 adenylates. The chain is Cap-specific mRNA (nucleoside-2'-O-)-methyltransferase (OPG102) from Sus scrofa (Pig).